A 122-amino-acid chain; its full sequence is Large ribosomal subunit protein eL31 (122 aa).

Belongs to the eukaryotic ribosomal protein eL31 family.

The protein is Large ribosomal subunit protein eL31 of Caenorhabditis elegans.